Here is a 178-residue protein sequence, read N- to C-terminus: CD209 antigen-like protein C (178 aa).

An intrachain disulfide couples cysteine 48 to cysteine 59. In terms of domain architecture, C-type lectin spans 54 to 169 (VFQGNCYFFS…CTIKKYWICK (116 aa)). Residue asparagine 70 is glycosylated (N-linked (GlcNAc...) asparagine). Disulfide bonds link cysteine 76–cysteine 168 and cysteine 147–cysteine 160. Ca(2+) is bound by residues glutamate 138, asparagine 140, glutamate 145, asparagine 156, and aspartate 157.

In terms of biological role, probable pathogen-recognition receptor. May recognize in a calcium-dependent manner high mannose N-linked oligosaccharides in a variety of pathogen antigens. The polypeptide is CD209 antigen-like protein C (Cd209c) (Mus musculus (Mouse)).